Consider the following 114-residue polypeptide: Photosystem II reaction center Psb28 protein (114 aa).

It belongs to the Psb28 family. As to quaternary structure, part of the photosystem II complex.

The protein resides in the cellular thylakoid membrane. This is Photosystem II reaction center Psb28 protein from Rippkaea orientalis (strain PCC 8801 / RF-1) (Cyanothece sp. (strain PCC 8801)).